The following is a 223-amino-acid chain: uncharacterized protein (223 aa).

The N-terminal 12 residues, 1–12 (MFRSLVRKTTPL), are a transit peptide targeting the mitochondrion.

It is found in the mitochondrion. This is an uncharacterized protein from Candida albicans (strain WO-1) (Yeast).